We begin with the raw amino-acid sequence, 344 residues long: Phosphoribosylformylglycinamidine cyclo-ligase (344 aa).

The protein belongs to the AIR synthase family.

It is found in the cytoplasm. The catalysed reaction is 2-formamido-N(1)-(5-O-phospho-beta-D-ribosyl)acetamidine + ATP = 5-amino-1-(5-phospho-beta-D-ribosyl)imidazole + ADP + phosphate + H(+). It functions in the pathway purine metabolism; IMP biosynthesis via de novo pathway; 5-amino-1-(5-phospho-D-ribosyl)imidazole from N(2)-formyl-N(1)-(5-phospho-D-ribosyl)glycinamide: step 2/2. In Haemophilus influenzae (strain PittEE), this protein is Phosphoribosylformylglycinamidine cyclo-ligase.